We begin with the raw amino-acid sequence, 370 residues long: Ubiquitin carboxyl-terminal hydrolase 12 (370 aa).

The Required for plasma membrane localization of USP12/WDR20 motif lies at 1 to 4 (MEIL). A USP domain is found at 39–369 (FGLVNFGNTC…SGYILFYQSR (331 aa)). The Nucleophile role is filled by cysteine 48. A compositionally biased stretch (basic and acidic residues) spans 146 to 157 (QEKQNGRLRNGD). The segment at 146 to 168 (QEKQNGRLRNGDVDNEDNNSTPD) is disordered. Residues cysteine 186, cysteine 189, cysteine 233, and cysteine 236 each coordinate Zn(2+). Histidine 317 acts as the Proton acceptor in catalysis.

Belongs to the peptidase C19 family. USP12/USP46 subfamily. In terms of assembly, interacts with WDR48. Interacts with WDR20; this interaction promotes translocation of the USP12 complex to the plasma membrane. Component of the USP12/WDR20/WDR48 deubiquitinating complex. Component of the USP12/DMWD/WDR48 deubiquitinating complex. Interacts with PHLPP1. Interacts with RBPJ. Interacts with CBP; this interaction blocks the acetyltransferase activity of CREBBP.

It localises to the nucleus. Its subcellular location is the cytoplasm. It is found in the cell membrane. The catalysed reaction is Thiol-dependent hydrolysis of ester, thioester, amide, peptide and isopeptide bonds formed by the C-terminal Gly of ubiquitin (a 76-residue protein attached to proteins as an intracellular targeting signal).. With respect to regulation, activated by interaction with WDR20; WDR48 and DMWD through different allosteric mechanisms. Deubiquitinating enzyme that plays various roles in the regulation of the immune response and inflammation. During TCR engagement and activation, translocates into the cytoplasm and deubiquitinates its substrates LAT and TRAT1 and prevents their lysosome-dependent degradation to stabilize the TCR signaling complex at the plasma membrane. Plays an essential role in the selective LPS-induced macrophage response through the activation of NF-kappa-B pathway. In addition, promotes that antiviral immune response through targeting DNA sensor IFI16 to inhibit its proteasome-dependent degradation. Participates in the interferon signaling pathway and antiviral response independently of its deubiquitinase activity by maintaining nuclear phosphorylated STAT1 levels via inhibition of its CREBBP-mediated acetylation and subsequent dephosphorylation. Plays an intrinsic role in promoting the differentiation, activation and proliferation of CD4(+) T-cell by activating the NF-kappa-B signaling pathway through deubiquitinating and stabilizing B-cell lymphoma/leukemia 10/BCL10. In myeloid-derived suppressor cells promotes the activation of the NF-kappa-B via deubiquitination and stabilization of RELA. Regulates the 'Lys-63'-linked polyubiquitin chains of BAX and thereby modulates the mitochondrial apoptotic process. Negative regulator of NOTCH signaling that specifically deubiquitinates non-activated NOTCH receptors to target them for lysosomal degradation; deubiquitination of NOTCH stimulates its transport form late endosomes to lysosomes. Protects neurons against HTT/huntingtin-induced polyglutamine expansion-dependent neurodegeneration through regulation of autophagic flux. This function is independent of deubiquitinase activity or of other components of the USP12-WDR20-WDR48 deubiquitinating complex. In complex with WDR48, acts as a potential tumor suppressor by positively regulating PHLPP1 stability. This chain is Ubiquitin carboxyl-terminal hydrolase 12 (Usp12), found in Mus musculus (Mouse).